A 20-amino-acid chain; its full sequence is L-amino-acid oxidase L2 (20 aa).

The protein belongs to the flavin monoamine oxidase family. FIG1 subfamily. Monomer. This is in contrast with most of its orthologs, that are non-covalently linked homodimers. It depends on FAD as a cofactor. N-glycosylated. In terms of tissue distribution, expressed by the venom gland.

It is found in the secreted. The catalysed reaction is an L-alpha-amino acid + O2 + H2O = a 2-oxocarboxylate + H2O2 + NH4(+). The enzyme catalyses L-leucine + O2 + H2O = 4-methyl-2-oxopentanoate + H2O2 + NH4(+). It catalyses the reaction L-phenylalanine + O2 + H2O = 3-phenylpyruvate + H2O2 + NH4(+). It carries out the reaction L-tryptophan + O2 + H2O = indole-3-pyruvate + H2O2 + NH4(+). The catalysed reaction is L-methionine + O2 + H2O = 4-methylsulfanyl-2-oxobutanoate + H2O2 + NH4(+). The enzyme catalyses L-isoleucine + O2 + H2O = (S)-3-methyl-2-oxopentanoate + H2O2 + NH4(+). It catalyses the reaction L-tyrosine + O2 + H2O = 3-(4-hydroxyphenyl)pyruvate + H2O2 + NH4(+). In terms of biological role, catalyzes an oxidative deamination of predominantly hydrophobic and aromatic L-amino acids, thus producing hydrogen peroxide that may contribute to the diverse toxic effects of this enzyme. Is active on L-Ile, L-Leu, L-Met, L-Phe, L-Trp, and L-Tyr. Exhibits diverse biological activities, such as hemorrhage, hemolysis, edema, apoptosis of vascular endothelial cells or tumor cell lines, antibacterial and antiparasitic activities, as well as regulation of platelet aggregation. Its effect on platelets is controversial, since it either induces aggregation or inhibits agonist-induced aggregation. These different effects are probably due to different experimental conditions. In Daboia russelii (Russel's viper), this protein is L-amino-acid oxidase L2.